We begin with the raw amino-acid sequence, 428 residues long: C4-dicarboxylate transport protein (428 aa).

Helical transmembrane passes span 7-27 (SLYFWVLVAIALGVILGIVAP), 40-60 (FIKLIKMVIAPIIFCTVVLGI), 75-95 (LALLYFEVVSTVSLILGLLIV), 143-163 (AFARGEILQVLLLAVLFGIAL), 196-216 (PIGAFGAMAFTIGAYGIGSLF), 221-241 (LMATFYLTCLCFIFLVLGAIA), 306-326 (IYLTMAAVFVAQATNSAMTLG), 329-349 (FTLLAVLLLMSKGAAGVTGSG), and 351-371 (IVLAATLSAIGKVPVGGLALI).

Belongs to the dicarboxylate/amino acid:cation symporter (DAACS) (TC 2.A.23) family.

The protein localises to the cell inner membrane. Responsible for the transport of dicarboxylates such as succinate, fumarate, and malate from the periplasm across the membrane. This chain is C4-dicarboxylate transport protein, found in Solibacter usitatus (strain Ellin6076).